We begin with the raw amino-acid sequence, 376 residues long: Coatomer subunit delta-4 (376 aa).

Residues 65 to 92 form a disordered region; that stretch reads LNTDTDTFTSRPKGRTSGGTTGAGKGIG. The segment covering 80-92 has biased composition (gly residues); sequence TSGGTTGAGKGIG. Residues 134-376 enclose the MHD domain; it reads SDPVTVAVEE…RLVADNYQVV (243 aa).

It belongs to the adaptor complexes medium subunit family. Delta-COP subfamily. In terms of assembly, oligomeric complex that consists of at least the alpha, beta, beta', gamma, delta, epsilon and zeta subunits.

Its subcellular location is the cytoplasm. It is found in the golgi apparatus membrane. It localises to the cytoplasmic vesicle. The protein resides in the COPI-coated vesicle membrane. Functionally, the coatomer is a cytosolic protein complex that binds to dilysine motifs and reversibly associates with Golgi non-clathrin-coated vesicles, which further mediate biosynthetic protein transport from the ER, via the Golgi up to the trans Golgi network. Coatomer complex is required for budding from Golgi membranes, and is essential for the retrograde Golgi-to-ER transport of dilysine-tagged proteins. This is Coatomer subunit delta-4 from Oryza sativa subsp. japonica (Rice).